Reading from the N-terminus, the 559-residue chain is MKKRRSDMIKKGFDRAPHRSLLRAAGVKDEDFDKPFIAVVNSYIDIIPGHVHLQEFGRIVKEAIREAGGVPFEMNTIGVDDGIAMGHIGMRYSLPSREIIADSIETVISAHWFDGMVCIPNCDKITPGMMMAAMRLNIPTIFVSGGPMKAGVTKDGRKISLSSVFEGVGAYLGGTLDEKGLEELERYGCPTCGSCSGMFTANSMNCLAEALGLALPGNGTILAVDPARKELVRQSAKQLMYLIEHDIKPRDIVTEKAIDNAFALDMALGGSTNTVLHTLAIANEAGIDYSLERINEVASRVPHLAKLAPASDVHYIEDLHEAGGVSAVLNELSKKEGALHLDTLTVTGKTLGENIAGCEVKNYDVIRPIDNPYSETGGLTILFGNLAPDGAVIKTGAVQGGITRHEGPAIVFDSQEEALEGIASGKIKPGHVVVIRYEGPKGGPGMPEMLAPTSQIVGMGLGTKVALVTDGRFSGASRGLSVGHVSPEAAEGGPIAFIQDGDIIEIDTVKRTINVKLSDEELERRKANWKGFEPKVKTGYLARYSKHVTSASTGGIMRI.

Mg(2+) is bound at residue D81. C122 is a binding site for [2Fe-2S] cluster. Residues D123 and K124 each coordinate Mg(2+). An N6-carboxylysine modification is found at K124. C195 contacts [2Fe-2S] cluster. A Mg(2+)-binding site is contributed by E448. S474 functions as the Proton acceptor in the catalytic mechanism.

The protein belongs to the IlvD/Edd family. As to quaternary structure, homodimer. [2Fe-2S] cluster is required as a cofactor. Mg(2+) serves as cofactor.

It catalyses the reaction (2R)-2,3-dihydroxy-3-methylbutanoate = 3-methyl-2-oxobutanoate + H2O. It carries out the reaction (2R,3R)-2,3-dihydroxy-3-methylpentanoate = (S)-3-methyl-2-oxopentanoate + H2O. Its pathway is amino-acid biosynthesis; L-isoleucine biosynthesis; L-isoleucine from 2-oxobutanoate: step 3/4. The protein operates within amino-acid biosynthesis; L-valine biosynthesis; L-valine from pyruvate: step 3/4. Functions in the biosynthesis of branched-chain amino acids. Catalyzes the dehydration of (2R,3R)-2,3-dihydroxy-3-methylpentanoate (2,3-dihydroxy-3-methylvalerate) into 2-oxo-3-methylpentanoate (2-oxo-3-methylvalerate) and of (2R)-2,3-dihydroxy-3-methylbutanoate (2,3-dihydroxyisovalerate) into 2-oxo-3-methylbutanoate (2-oxoisovalerate), the penultimate precursor to L-isoleucine and L-valine, respectively. In Geobacillus kaustophilus (strain HTA426), this protein is Dihydroxy-acid dehydratase.